The primary structure comprises 284 residues: L-ribulose-5-phosphate 3-epimerase UlaE (284 aa).

Belongs to the L-ribulose-5-phosphate 3-epimerase family.

It catalyses the reaction L-ribulose 5-phosphate = L-xylulose 5-phosphate. Its pathway is cofactor degradation; L-ascorbate degradation; D-xylulose 5-phosphate from L-ascorbate: step 3/4. In terms of biological role, catalyzes the isomerization of L-xylulose-5-phosphate to L-ribulose-5-phosphate. Is involved in the anaerobic L-ascorbate utilization. The sequence is that of L-ribulose-5-phosphate 3-epimerase UlaE from Shigella flexneri.